Reading from the N-terminus, the 219-residue chain is C-8 sterol isomerase erg2 (219 aa).

A helical membrane pass occupies residues 1-21 (MKLTKFLTVFIPFIAGLIYYI).

It belongs to the ERG2 family.

Its subcellular location is the endoplasmic reticulum membrane. It catalyses the reaction fecosterol = episterol. Its pathway is steroid metabolism; ergosterol biosynthesis. Functionally, C-8 sterol isomerase; part of the third module of ergosterol biosynthesis pathway that includes by the late steps of the pathway. Erg2 catalyzes the reaction which results in unsaturation at C-7 in the B ring of sterols and thus converts fecosterol to episterol. The third module or late pathway involves the ergosterol synthesis itself through consecutive reactions that mainly occur in the endoplasmic reticulum (ER) membrane. Firstly, the squalene synthase erg9 catalyzes the condensation of 2 farnesyl pyrophosphate moieties to form squalene, which is the precursor of all steroids. Secondly, squalene is converted into lanosterol by the consecutive action of the squalene epoxidase erg1 and the lanosterol synthase erg7. The lanosterol 14-alpha-demethylase erg11/cyp1 catalyzes C14-demethylation of lanosterol to produce 4,4'-dimethyl cholesta-8,14,24-triene-3-beta-ol. In the next steps, a complex process involving various demethylation, reduction and desaturation reactions catalyzed by the C-14 reductase erg24 and the C-4 demethylation complex erg25-erg26-erg27 leads to the production of zymosterol. Erg28 likely functions in the C-4 demethylation complex reaction by tethering erg26 and Erg27 to the endoplasmic reticulum or to facilitate interaction between these proteins. Then, the sterol 24-C-methyltransferase erg6 catalyzes the methyl transfer from S-adenosyl-methionine to the C-24 of zymosterol to form fecosterol. The C-8 sterol isomerase erg2 catalyzes the reaction which results in unsaturation at C-7 in the B ring of sterols and thus converts fecosterol to episterol. The sterol-C5-desaturases erg31 and erg32 then catalyze the introduction of a C-5 double bond in the B ring to produce 5-dehydroepisterol. The C-22 sterol desaturase erg5 further converts 5-dehydroepisterol into ergosta-5,7,22,24(28)-tetraen-3beta-ol by forming the C-22(23) double bond in the sterol side chain. Finally, ergosta-5,7,22,24(28)-tetraen-3beta-ol is substrate of the C-24(28) sterol reductase erg4 to produce ergosterol. In the genus Schizosaccharomyces, a second route exists between lanosterol and fecosterol, via the methylation of lanosterol to eburicol by erg6, followed by C14-demethylation by erg11/cyp1 and C4-demethylation by the demethylation complex erg25-erg26-erg27. The chain is C-8 sterol isomerase erg2 from Schizosaccharomyces pombe (strain 972 / ATCC 24843) (Fission yeast).